The chain runs to 245 residues: Zinc finger protein 575 (245 aa).

Residues 1-67 are disordered; sequence MLERGAESAA…PPQRPHRCPD (67 aa). Over residues 36-49 the composition is skewed to low complexity; it reads PSQSAPGPTASAGS. The segment covering 52-63 has biased composition (basic residues); it reads RPRRRPPPQRPH. 6 C2H2-type zinc fingers span residues 63 to 85, 91 to 113, 119 to 141, 147 to 169, 177 to 199, and 213 to 240; these read HRCP…RLAH, HPCP…RLTH, HPCP…LWTH, YPCP…RHTH, YPCP…RLCH, and HRCS…QVEH.

This sequence belongs to the krueppel C2H2-type zinc-finger protein family.

It is found in the nucleus. May be involved in transcriptional regulation. This chain is Zinc finger protein 575 (ZNF575), found in Homo sapiens (Human).